The chain runs to 156 residues: Small ribosomal subunit protein uS7 (156 aa).

Belongs to the universal ribosomal protein uS7 family. In terms of assembly, part of the 30S ribosomal subunit. Contacts proteins S9 and S11.

One of the primary rRNA binding proteins, it binds directly to 16S rRNA where it nucleates assembly of the head domain of the 30S subunit. Is located at the subunit interface close to the decoding center, probably blocks exit of the E-site tRNA. The protein is Small ribosomal subunit protein uS7 of Glaesserella parasuis serovar 5 (strain SH0165) (Haemophilus parasuis).